The sequence spans 242 residues: Peptidase E (242 aa).

Catalysis depends on charge relay system residues Ser123, Asp138, and His160.

It belongs to the peptidase S51 family.

The protein localises to the cytoplasm. It catalyses the reaction Dipeptidase E catalyzes the hydrolysis of dipeptides Asp-|-Xaa. It does not act on peptides with N-terminal Glu, Asn or Gln, nor does it cleave isoaspartyl peptides.. In terms of biological role, hydrolyzes dipeptides containing N-terminal aspartate residues. May play a role in allowing the cell to use peptide aspartate to spare carbon otherwise required for the synthesis of the aspartate family of amino acids. The polypeptide is Peptidase E (Nostoc sp. (strain PCC 7120 / SAG 25.82 / UTEX 2576)).